A 159-amino-acid chain; its full sequence is Endoribonuclease YbeY (159 aa).

Positions 119, 123, and 129 each coordinate Zn(2+).

The protein belongs to the endoribonuclease YbeY family. It depends on Zn(2+) as a cofactor.

It is found in the cytoplasm. Its function is as follows. Single strand-specific metallo-endoribonuclease involved in late-stage 70S ribosome quality control and in maturation of the 3' terminus of the 16S rRNA. This Acinetobacter baylyi (strain ATCC 33305 / BD413 / ADP1) protein is Endoribonuclease YbeY.